The sequence spans 862 residues: Valine--tRNA ligase (862 aa).

Residues 43–53 carry the 'HIGH' region motif; sequence PNVTGSLHMGH. Zn(2+)-binding residues include cysteine 176, cysteine 179, cysteine 344, cysteine 347, cysteine 417, cysteine 420, cysteine 438, and cysteine 441. The short motif at 528–532 is the 'KMSKS' region element; sequence KMSKS. Lysine 531 contributes to the ATP binding site. Positions 802–862 form a coiled coil; sequence RRRQEKRLKE…RIREALSQIG (61 aa).

The protein belongs to the class-I aminoacyl-tRNA synthetase family. ValS type 1 subfamily. As to quaternary structure, monomer. Requires Zn(2+) as cofactor.

The protein localises to the cytoplasm. The catalysed reaction is tRNA(Val) + L-valine + ATP = L-valyl-tRNA(Val) + AMP + diphosphate. Its function is as follows. Catalyzes the attachment of valine to tRNA(Val). As ValRS can inadvertently accommodate and process structurally similar amino acids such as threonine, to avoid such errors, it has a 'posttransfer' editing activity that hydrolyzes mischarged Thr-tRNA(Val) in a tRNA-dependent manner. The polypeptide is Valine--tRNA ligase (Thermus thermophilus (strain ATCC BAA-163 / DSM 7039 / HB27)).